Consider the following 491-residue polypeptide: Glycylpeptide N-tetradecanoyltransferase (491 aa).

Residue 45-48 (HKFW) coordinates tetradecanoyl-CoA. The tract at residues 53–79 (VPQITGSGASAPMEEGPIDDPKTPADV) is disordered. Tetradecanoyl-CoA contacts are provided by residues 182-184 (LCV) and 190-194 (SKRLA). Leucine 491 serves as the catalytic Proton acceptor; via carboxylate.

Belongs to the NMT family. Monomer.

It localises to the cytoplasm. It catalyses the reaction N-terminal glycyl-[protein] + tetradecanoyl-CoA = N-tetradecanoylglycyl-[protein] + CoA + H(+). Adds a myristoyl group to the N-terminal glycine residue of certain cellular proteins. The polypeptide is Glycylpeptide N-tetradecanoyltransferase (Cryptococcus neoformans (Filobasidiella neoformans)).